A 77-amino-acid chain; its full sequence is Large ribosomal subunit protein bL28 (77 aa).

Belongs to the bacterial ribosomal protein bL28 family.

This Paracidovorax citrulli (strain AAC00-1) (Acidovorax citrulli) protein is Large ribosomal subunit protein bL28.